A 200-amino-acid polypeptide reads, in one-letter code: Endoribonuclease YbeY (200 aa).

Positions 1–18 (MPADPALPDPVPPGPTAP) are enriched in pro residues. The disordered stretch occupies residues 1 to 22 (MPADPALPDPVPPGPTAPVPTD). The Zn(2+) site is built by His-151, His-155, and His-161.

Belongs to the endoribonuclease YbeY family. Zn(2+) is required as a cofactor.

The protein resides in the cytoplasm. Single strand-specific metallo-endoribonuclease involved in late-stage 70S ribosome quality control and in maturation of the 3' terminus of the 16S rRNA. The chain is Endoribonuclease YbeY from Rhodospirillum rubrum (strain ATCC 11170 / ATH 1.1.1 / DSM 467 / LMG 4362 / NCIMB 8255 / S1).